The following is a 424-amino-acid chain: Serine--tRNA ligase (424 aa).

230 to 232 (TAE) lines the L-serine pocket. 261–263 (RSE) contacts ATP. An L-serine-binding site is contributed by E284. An ATP-binding site is contributed by 348-351 (EISS). S384 lines the L-serine pocket.

This sequence belongs to the class-II aminoacyl-tRNA synthetase family. Type-1 seryl-tRNA synthetase subfamily. As to quaternary structure, homodimer. The tRNA molecule binds across the dimer.

The protein localises to the cytoplasm. It carries out the reaction tRNA(Ser) + L-serine + ATP = L-seryl-tRNA(Ser) + AMP + diphosphate + H(+). The enzyme catalyses tRNA(Sec) + L-serine + ATP = L-seryl-tRNA(Sec) + AMP + diphosphate + H(+). Its pathway is aminoacyl-tRNA biosynthesis; selenocysteinyl-tRNA(Sec) biosynthesis; L-seryl-tRNA(Sec) from L-serine and tRNA(Sec): step 1/1. Catalyzes the attachment of serine to tRNA(Ser). Is also able to aminoacylate tRNA(Sec) with serine, to form the misacylated tRNA L-seryl-tRNA(Sec), which will be further converted into selenocysteinyl-tRNA(Sec). The sequence is that of Serine--tRNA ligase from Streptococcus pneumoniae (strain ATCC 700669 / Spain 23F-1).